A 340-amino-acid chain; its full sequence is UDP-3-O-(3-hydroxymyristoyl)glucosamine N-acyltransferase (340 aa).

The active-site Proton acceptor is the H239.

Belongs to the transferase hexapeptide repeat family. LpxD subfamily. As to quaternary structure, homotrimer.

It catalyses the reaction a UDP-3-O-[(3R)-3-hydroxyacyl]-alpha-D-glucosamine + a (3R)-hydroxyacyl-[ACP] = a UDP-2-N,3-O-bis[(3R)-3-hydroxyacyl]-alpha-D-glucosamine + holo-[ACP] + H(+). It carries out the reaction UDP-3-O-[(3R)-3-hydroxytetradecanoyl]-alpha-D-glucosamine + (3R)-hydroxytetradecanoyl-[ACP] = UDP-2-N,3-O-bis[(3R)-3-hydroxytetradecanoyl]-alpha-D-glucosamine + holo-[ACP] + H(+). It functions in the pathway glycolipid biosynthesis; lipid IV(A) biosynthesis; lipid IV(A) from (3R)-3-hydroxytetradecanoyl-[acyl-carrier-protein] and UDP-N-acetyl-alpha-D-glucosamine: step 3/6. Catalyzes the N-acylation of UDP-3-O-(hydroxytetradecanoyl)glucosamine using 3-hydroxytetradecanoyl-ACP as the acyl donor. Is involved in the biosynthesis of lipid A, a phosphorylated glycolipid that anchors the lipopolysaccharide to the outer membrane of the cell. In Yersinia pestis bv. Antiqua (strain Antiqua), this protein is UDP-3-O-(3-hydroxymyristoyl)glucosamine N-acyltransferase.